Here is a 1298-residue protein sequence, read N- to C-terminus: Phosphoribosylformylglycinamidine synthase (1298 aa).

A disordered region spans residues phenylalanine 303–lysine 327. Residues glycine 305–aspartate 316, threonine 384–tyrosine 386, and alanine 676 each bind ATP. Aspartate 677, glutamate 716, asparagine 720, and aspartate 884 together coordinate Mg(2+). Residue serine 886 coordinates ATP. The 254-residue stretch at valine 1045–asparagine 1298 folds into the Glutamine amidotransferase type-1 domain. The active-site Nucleophile is the cysteine 1138. Catalysis depends on residues histidine 1263 and glutamate 1265.

The protein in the N-terminal section; belongs to the FGAMS family. In terms of assembly, monomer.

Its subcellular location is the cytoplasm. It carries out the reaction N(2)-formyl-N(1)-(5-phospho-beta-D-ribosyl)glycinamide + L-glutamine + ATP + H2O = 2-formamido-N(1)-(5-O-phospho-beta-D-ribosyl)acetamidine + L-glutamate + ADP + phosphate + H(+). The protein operates within purine metabolism; IMP biosynthesis via de novo pathway; 5-amino-1-(5-phospho-D-ribosyl)imidazole from N(2)-formyl-N(1)-(5-phospho-D-ribosyl)glycinamide: step 1/2. In terms of biological role, phosphoribosylformylglycinamidine synthase involved in the purines biosynthetic pathway. Catalyzes the ATP-dependent conversion of formylglycinamide ribonucleotide (FGAR) and glutamine to yield formylglycinamidine ribonucleotide (FGAM) and glutamate. This chain is Phosphoribosylformylglycinamidine synthase, found in Pseudomonas syringae pv. syringae (strain B728a).